Consider the following 322-residue polypeptide: Sulfate adenylyltransferase subunit 2 (322 aa).

It belongs to the PAPS reductase family. CysD subfamily. Heterodimer composed of CysD, the smaller subunit, and CysN.

The enzyme catalyses sulfate + ATP + H(+) = adenosine 5'-phosphosulfate + diphosphate. It participates in sulfur metabolism; hydrogen sulfide biosynthesis; sulfite from sulfate: step 1/3. In terms of biological role, with CysN forms the ATP sulfurylase (ATPS) that catalyzes the adenylation of sulfate producing adenosine 5'-phosphosulfate (APS) and diphosphate, the first enzymatic step in sulfur assimilation pathway. APS synthesis involves the formation of a high-energy phosphoric-sulfuric acid anhydride bond driven by GTP hydrolysis by CysN coupled to ATP hydrolysis by CysD. This chain is Sulfate adenylyltransferase subunit 2, found in Bradyrhizobium sp. (strain BTAi1 / ATCC BAA-1182).